A 217-amino-acid polypeptide reads, in one-letter code: Uracil-DNA glycosylase (217 aa).

The active-site Proton acceptor is the Asp-62.

The protein belongs to the uracil-DNA glycosylase (UDG) superfamily. UNG family.

It localises to the cytoplasm. The catalysed reaction is Hydrolyzes single-stranded DNA or mismatched double-stranded DNA and polynucleotides, releasing free uracil.. Its function is as follows. Excises uracil residues from the DNA which can arise as a result of misincorporation of dUMP residues by DNA polymerase or due to deamination of cytosine. This is Uracil-DNA glycosylase from Streptococcus thermophilus (strain ATCC BAA-491 / LMD-9).